Reading from the N-terminus, the 461-residue chain is Photosystem II CP43 reaction center protein (461 aa).

Residues 1-2 constitute a propeptide that is removed on maturation; that stretch reads ME. T3 is subject to N-acetylthreonine. A Phosphothreonine modification is found at T3. A run of 5 helical transmembrane segments spans residues 57–81, 122–143, 166–188, 243–263, and 279–300; these read LFEV…PHLA, LIGP…KDKN, KAMY…RVIT, KPWA…LSYS, and WFNN…ASQS. E355 lines the [CaMn4O5] cluster pocket. Residues 435 to 459 traverse the membrane as a helical segment; sequence RARAAAAGFEKGIDRDNEPVLSMKP.

It belongs to the PsbB/PsbC family. PsbC subfamily. In terms of assembly, PSII is composed of 1 copy each of membrane proteins PsbA, PsbB, PsbC, PsbD, PsbE, PsbF, PsbH, PsbI, PsbJ, PsbK, PsbL, PsbM, PsbT, PsbX, PsbY, PsbZ, Psb30/Ycf12, at least 3 peripheral proteins of the oxygen-evolving complex and a large number of cofactors. It forms dimeric complexes. It depends on Binds multiple chlorophylls and provides some of the ligands for the Ca-4Mn-5O cluster of the oxygen-evolving complex. It may also provide a ligand for a Cl- that is required for oxygen evolution. PSII binds additional chlorophylls, carotenoids and specific lipids. as a cofactor.

The protein localises to the plastid. Its subcellular location is the chloroplast thylakoid membrane. Functionally, one of the components of the core complex of photosystem II (PSII). It binds chlorophyll and helps catalyze the primary light-induced photochemical processes of PSII. PSII is a light-driven water:plastoquinone oxidoreductase, using light energy to abstract electrons from H(2)O, generating O(2) and a proton gradient subsequently used for ATP formation. This chain is Photosystem II CP43 reaction center protein, found in Tupiella akineta (Green alga).